A 500-amino-acid chain; its full sequence is Phenylalanine--tRNA ligase alpha subunit (500 aa).

L-phenylalanine-binding positions include T343, 382–384 (QVD), and F423. E425 contacts Mg(2+). Residue F448 coordinates L-phenylalanine.

This sequence belongs to the class-II aminoacyl-tRNA synthetase family. Phe-tRNA synthetase alpha subunit type 2 subfamily. In terms of assembly, tetramer of two alpha and two beta subunits. The cofactor is Mg(2+).

Its subcellular location is the cytoplasm. It catalyses the reaction tRNA(Phe) + L-phenylalanine + ATP = L-phenylalanyl-tRNA(Phe) + AMP + diphosphate + H(+). The protein is Phenylalanine--tRNA ligase alpha subunit of Thermococcus onnurineus (strain NA1).